The chain runs to 120 residues: Large ribosomal subunit protein P3 (120 aa).

Residues 83 to 120 (GGGGAAASGGAAAEAPKEEKKEEEKEESDDDMGFSLFD) form a disordered region.

Belongs to the eukaryotic ribosomal protein P1/P2 family. Post-translationally, phosphorylated.

Its function is as follows. Plays an important role in the elongation step of protein synthesis. The sequence is that of Large ribosomal subunit protein P3 (RPP3A) from Zea mays (Maize).